We begin with the raw amino-acid sequence, 328 residues long: Phosphate acyltransferase (328 aa).

This sequence belongs to the PlsX family. As to quaternary structure, homodimer. Probably interacts with PlsY.

The protein localises to the cytoplasm. It catalyses the reaction a fatty acyl-[ACP] + phosphate = an acyl phosphate + holo-[ACP]. The protein operates within lipid metabolism; phospholipid metabolism. Catalyzes the reversible formation of acyl-phosphate (acyl-PO(4)) from acyl-[acyl-carrier-protein] (acyl-ACP). This enzyme utilizes acyl-ACP as fatty acyl donor, but not acyl-CoA. The protein is Phosphate acyltransferase of Staphylococcus aureus (strain MSSA476).